A 342-amino-acid polypeptide reads, in one-letter code: Voltage-gated hydrogen channel 1 (342 aa).

2 disordered regions span residues M1–N20 and F74–K102. Topologically, residues M1–P148 are cytoplasmic. The segment covering Q86–K102 has biased composition (polar residues). A helical transmembrane segment spans residues I149 to L169. At I170 to E185 the chain is on the extracellular side. Residues I186–A208 traverse the membrane as a helical segment. The Cytoplasmic portion of the chain corresponds to D209 to K217. A helical transmembrane segment spans residues V218–F238. At V239–A247 the chain is on the extracellular side. A helical membrane pass occupies residues I248–V268. Residues T269 to V342 lie on the Cytoplasmic side of the membrane. The stretch at K271–C315 forms a coiled coil.

Belongs to the hydrogen channel family. In terms of assembly, homodimer.

The protein resides in the membrane. Its subcellular location is the cell membrane. Its activity is regulated as follows. Less sensitive to zinc ions as compared to the mammalian homologs. In terms of biological role, mediates the voltage-dependent proton permeability of excitable membranes. Forms a proton-selective channel through which protons may pass in accordance with their electrochemical gradient. In Ciona intestinalis (Transparent sea squirt), this protein is Voltage-gated hydrogen channel 1 (HVCN1).